Reading from the N-terminus, the 552-residue chain is Putative transport protein YPN_3727 (552 aa).

Helical transmembrane passes span 1 to 21 (MSAI…GLWI), 26 to 46 (IYGV…VGHF), 65 to 85 (FGLI…FFSS), 96 to 116 (FAIL…KLFA), 119 to 139 (LPII…LGAA), and 158 to 178 (MGYA…MWLI). RCK C-terminal domains follow at residues 192-276 (AFDS…VVGE) and 279-361 (DVTL…IVGN). The next 6 membrane-spanning stretches (helical) occupy residues 371–391 (MLPV…PLFV), 393–413 (GFPA…ALIL), 439–459 (IVLF…NTLV), 464–484 (LAWI…VGIL), 493–513 (YLTL…LAFA), and 530–550 (VYPL…VLFW).

The protein belongs to the AAE transporter (TC 2.A.81) family. YidE subfamily.

It is found in the cell membrane. The protein is Putative transport protein YPN_3727 of Yersinia pestis bv. Antiqua (strain Nepal516).